Reading from the N-terminus, the 682-residue chain is Methionine--tRNA ligase (682 aa).

The short motif at 14-24 (PYANGPVHLGH) is the 'HIGH' region element. 4 residues coordinate Zn(2+): C145, C148, C158, and C161. The 'KMSKS' region motif lies at 331–335 (KMSKS). ATP is bound at residue K334. Residues 580–682 (AFAAVDLRVA…SGAKPGQRIK (103 aa)) enclose the tRNA-binding domain.

This sequence belongs to the class-I aminoacyl-tRNA synthetase family. MetG type 1 subfamily. Homodimer. Requires Zn(2+) as cofactor.

The protein localises to the cytoplasm. The catalysed reaction is tRNA(Met) + L-methionine + ATP = L-methionyl-tRNA(Met) + AMP + diphosphate. Is required not only for elongation of protein synthesis but also for the initiation of all mRNA translation through initiator tRNA(fMet) aminoacylation. This Pseudomonas syringae pv. tomato (strain ATCC BAA-871 / DC3000) protein is Methionine--tRNA ligase.